Here is a 492-residue protein sequence, read N- to C-terminus: Stomatal closure-related actin-binding protein 2 (492 aa).

Residues 112 to 132 adopt a coiled-coil conformation; that stretch reads LKKLRDALETMRGRMDGRNRE.

This sequence belongs to the SCAB family. In terms of tissue distribution, expressed in roots, stems, leaves, siliques and flowers.

It localises to the cytoplasm. The protein resides in the cytoskeleton. Functionally, probable plant-specific actin binding protein that bundles and stabilizes microfilaments (MFs). This chain is Stomatal closure-related actin-binding protein 2, found in Arabidopsis thaliana (Mouse-ear cress).